A 320-amino-acid chain; its full sequence is Cytochrome f (320 aa).

An N-terminal signal peptide occupies residues 1 to 35 (MENRNTFSWVKEQITRSISVSIMIYVITRTSISNA). Heme is bound by residues Y36, C56, C59, and H60. Residues 286–305 (VQGLLFFFASVILAQVFLVL) traverse the membrane as a helical segment.

It belongs to the cytochrome f family. The 4 large subunits of the cytochrome b6-f complex are cytochrome b6, subunit IV (17 kDa polypeptide, petD), cytochrome f and the Rieske protein, while the 4 small subunits are PetG, PetL, PetM and PetN. The complex functions as a dimer. Heme is required as a cofactor.

It is found in the plastid. Its subcellular location is the chloroplast thylakoid membrane. Its function is as follows. Component of the cytochrome b6-f complex, which mediates electron transfer between photosystem II (PSII) and photosystem I (PSI), cyclic electron flow around PSI, and state transitions. This is Cytochrome f (petA) from Triticum aestivum (Wheat).